Here is a 167-residue protein sequence, read N- to C-terminus: Photosystem I assembly protein Ycf3 (167 aa).

TPR repeat units lie at residues Ala-35 to Pro-68, Ser-72 to Leu-105, and Gly-120 to Asn-153.

This sequence belongs to the Ycf3 family.

The protein localises to the plastid. Its subcellular location is the chloroplast thylakoid membrane. Essential for the assembly of the photosystem I (PSI) complex. May act as a chaperone-like factor to guide the assembly of the PSI subunits. The protein is Photosystem I assembly protein Ycf3 of Zygnema circumcarinatum (Green alga).